Consider the following 398-residue polypeptide: Queuine tRNA-ribosyltransferase (398 aa).

Residue Asp-102 is the Proton acceptor of the active site. Residues 102-106 (DSGGF), Asp-156, Gln-205, and Gly-232 contribute to the substrate site. The RNA binding stretch occupies residues 263–269 (GVGTPED). Asp-282 (nucleophile) is an active-site residue. The interval 287–291 (TRNAR) is RNA binding; important for wobble base 34 recognition. The Zn(2+) site is built by Cys-320, Cys-322, Cys-325, and His-362.

The protein belongs to the queuine tRNA-ribosyltransferase family. As to quaternary structure, homodimer. Within each dimer, one monomer is responsible for RNA recognition and catalysis, while the other monomer binds to the replacement base PreQ1. The cofactor is Zn(2+).

It catalyses the reaction 7-aminomethyl-7-carbaguanine + guanosine(34) in tRNA = 7-aminomethyl-7-carbaguanosine(34) in tRNA + guanine. It participates in tRNA modification; tRNA-queuosine biosynthesis. In terms of biological role, catalyzes the base-exchange of a guanine (G) residue with the queuine precursor 7-aminomethyl-7-deazaguanine (PreQ1) at position 34 (anticodon wobble position) in tRNAs with GU(N) anticodons (tRNA-Asp, -Asn, -His and -Tyr). Catalysis occurs through a double-displacement mechanism. The nucleophile active site attacks the C1' of nucleotide 34 to detach the guanine base from the RNA, forming a covalent enzyme-RNA intermediate. The proton acceptor active site deprotonates the incoming PreQ1, allowing a nucleophilic attack on the C1' of the ribose to form the product. After dissociation, two additional enzymatic reactions on the tRNA convert PreQ1 to queuine (Q), resulting in the hypermodified nucleoside queuosine (7-(((4,5-cis-dihydroxy-2-cyclopenten-1-yl)amino)methyl)-7-deazaguanosine). The sequence is that of Queuine tRNA-ribosyltransferase from Polaromonas sp. (strain JS666 / ATCC BAA-500).